The sequence spans 283 residues: Large ribosomal subunit protein uL2 (283 aa).

Disordered regions lie at residues 37–59 and 219–283; these read AKKK…RGGG and HKGI…RNSK. The span at 256-269 shows a compositional bias: basic residues; sequence WGKRHMGVKTRNNK.

This sequence belongs to the universal ribosomal protein uL2 family. Part of the 50S ribosomal subunit. Forms a bridge to the 30S subunit in the 70S ribosome.

One of the primary rRNA binding proteins. Required for association of the 30S and 50S subunits to form the 70S ribosome, for tRNA binding and peptide bond formation. It has been suggested to have peptidyltransferase activity; this is somewhat controversial. Makes several contacts with the 16S rRNA in the 70S ribosome. This chain is Large ribosomal subunit protein uL2, found in Mycoplasmoides gallisepticum (strain R(low / passage 15 / clone 2)) (Mycoplasma gallisepticum).